Consider the following 185-residue polypeptide: Crossover junction endodeoxyribonuclease RuvC (185 aa).

Residues aspartate 7, glutamate 66, and aspartate 137 contribute to the active site. Residues aspartate 7, glutamate 66, and aspartate 137 each coordinate Mg(2+).

This sequence belongs to the RuvC family. As to quaternary structure, homodimer which binds Holliday junction (HJ) DNA. The HJ becomes 2-fold symmetrical on binding to RuvC with unstacked arms; it has a different conformation from HJ DNA in complex with RuvA. In the full resolvosome a probable DNA-RuvA(4)-RuvB(12)-RuvC(2) complex forms which resolves the HJ. Mg(2+) serves as cofactor.

The protein localises to the cytoplasm. It catalyses the reaction Endonucleolytic cleavage at a junction such as a reciprocal single-stranded crossover between two homologous DNA duplexes (Holliday junction).. The RuvA-RuvB-RuvC complex processes Holliday junction (HJ) DNA during genetic recombination and DNA repair. Endonuclease that resolves HJ intermediates. Cleaves cruciform DNA by making single-stranded nicks across the HJ at symmetrical positions within the homologous arms, yielding a 5'-phosphate and a 3'-hydroxyl group; requires a central core of homology in the junction. The consensus cleavage sequence is 5'-(A/T)TT(C/G)-3'. Cleavage occurs on the 3'-side of the TT dinucleotide at the point of strand exchange. HJ branch migration catalyzed by RuvA-RuvB allows RuvC to scan DNA until it finds its consensus sequence, where it cleaves and resolves the cruciform DNA. The protein is Crossover junction endodeoxyribonuclease RuvC of Anaeromyxobacter dehalogenans (strain 2CP-C).